We begin with the raw amino-acid sequence, 91 residues long: Small ribosomal subunit protein uS19 (91 aa).

Positions 1 to 32 (MPRSIKKGPFIDEHLDRKVQSAQASNSRRPIK) are disordered. Basic and acidic residues predominate over residues 9–19 (PFIDEHLDRKV).

It belongs to the universal ribosomal protein uS19 family.

Functionally, protein S19 forms a complex with S13 that binds strongly to the 16S ribosomal RNA. This is Small ribosomal subunit protein uS19 from Acidithiobacillus ferrooxidans (strain ATCC 53993 / BNL-5-31) (Leptospirillum ferrooxidans (ATCC 53993)).